Reading from the N-terminus, the 130-residue chain is UPF0102 protein SCO5602 (130 aa).

The protein belongs to the UPF0102 family.

This chain is UPF0102 protein SCO5602, found in Streptomyces coelicolor (strain ATCC BAA-471 / A3(2) / M145).